Here is a 66-residue protein sequence, read N- to C-terminus: Large ribosomal subunit protein bL35 (66 aa).

The span at 1–26 shows a compositional bias: basic residues; sequence MPKMKTHRGSAKRFKKTASGKLKRGH. A disordered region spans residues 1-28; that stretch reads MPKMKTHRGSAKRFKKTASGKLKRGHAY.

It belongs to the bacterial ribosomal protein bL35 family.

The polypeptide is Large ribosomal subunit protein bL35 (Geobacillus thermodenitrificans (strain NG80-2)).